A 421-amino-acid polypeptide reads, in one-letter code: Inner membrane protein YihN (421 aa).

Residues 1–44 (MLTKKKWALFSLLTLCGGTIYKLPSLKDAFYIPMQEYFHLTNGQ) lie on the Periplasmic side of the membrane. The chain crosses the membrane as a helical span at residues 45–65 (IGNAMSVNSFVTTVGFFLSIY). At 66–73 (FADKLPRR) the chain is on the cytoplasmic side. The chain crosses the membrane as a helical span at residues 74-91 (YTMSFSLIATGLLGVYLT). Residues 92 to 95 (TMPG) are Periplasmic-facing. The helical transmembrane segment at 96-118 (YWGILFVWALFGVTCDMMNWPVL) threads the bilayer. At 119 to 146 (LKSVSRLGNSEQQGRLFGFFETGRGIVD) the chain is on the cytoplasmic side. Residues 147-167 (TVVAFSALAVFTWFGSGLLGF) traverse the membrane as a helical segment. Residue Lys168 is a topological domain, periplasmic. A helical transmembrane segment spans residues 169-189 (AGIWFYSLIVIAVGIIIFFVL). The Cytoplasmic segment spans residues 190–220 (NDKEEAPSVEVKKEDGASKNTSMTSVLKDKT). Helical transmembrane passes span 221 to 241 (IWLI…LTFF) and 242 to 262 (IPFL…YGII). The Cytoplasmic segment spans residues 263-288 (NQYCLKMIGGPIGGMISDKILKSPSK). 2 helical membrane passes run 289–309 (YLCY…MLPH) and 310–330 (ESMP…IVFT). At 331-354 (QRAVFFAPIGEAKIAENKTGAAMA) the chain is on the cytoplasmic side. The helical transmembrane segment at 355 to 375 (LGSFIGYAPAMFCFSLYGYIL) threads the bilayer. Topologically, residues 376–385 (DLNPGIIGYK) are periplasmic. The helical transmembrane segment at 386–406 (IVFGIMACFAFSGAVVSVMLV) threads the bilayer. At 407–421 (KRISQRKKEMLAAEA) the chain is on the cytoplasmic side.

Belongs to the major facilitator superfamily.

Its subcellular location is the cell inner membrane. The protein is Inner membrane protein YihN (yihN) of Escherichia coli (strain K12).